We begin with the raw amino-acid sequence, 169 residues long: DNA damage-inducible transcript 3 protein (169 aa).

The tract at residues 10 to 18 is interaction with TRIB3; the sequence is FGTLSSWEL. The interval 10–26 is N-terminal; it reads FGTLSSWELEAWYEDLQ. Phosphoserine; by CK2 is present on residues serine 14, serine 15, serine 30, and serine 31. Positions 32-139 are disordered; the sequence is DENGGTYVSP…KVAQLAEENE (108 aa). The segment covering 74 to 89 has biased composition (low complexity); it reads TSTSQSPHSPDSSQSS. Residues serine 79 and serine 82 each carry the phosphoserine; by MAPK14 modification. A bZIP domain is found at 99 to 162; sequence QGRTRKRKQS…EATRRALIDR (64 aa). The interval 101-130 is basic motif; it reads RTRKRKQSGHSPARAGKQRMKEKEQENERK. Basic and acidic residues predominate over residues 119–139; that stretch reads RMKEKEQENERKVAQLAEENE. Residues 134 to 148 form a leucine-zipper region; the sequence is LAEENERLKQEIERL.

It belongs to the bZIP family. In terms of assembly, heterodimer. Interacts with TCF7L2/TCF4, EP300/P300, HDAC1, HDAC5 and HDAC6. Interacts with TRIB3 which blocks its association with EP300/P300. Interacts with FOXO3, CEBPB and ATF4. As to quaternary structure, interacts with isoform AltDDIT3 of DDIT3. Post-translationally, ubiquitinated, leading to its degradation by the proteasome. Phosphorylation at serine residues by MAPK14 enhances its transcriptional activation activity while phosphorylation at serine residues by CK2 inhibits its transcriptional activation activity.

Its subcellular location is the cytoplasm. It localises to the nucleus. In terms of biological role, multifunctional transcription factor in endoplasmic reticulum (ER) stress response. Plays an essential role in the response to a wide variety of cell stresses and induces cell cycle arrest and apoptosis in response to ER stress. Plays a dual role both as an inhibitor of CCAAT/enhancer-binding protein (C/EBP) function and as an activator of other genes. Acts as a dominant-negative regulator of C/EBP-induced transcription: dimerizes with members of the C/EBP family, impairs their association with C/EBP binding sites in the promoter regions, and inhibits the expression of C/EBP regulated genes. Positively regulates the transcription of TRIB3, IL6, IL8, IL23, TNFRSF10B/DR5, PPP1R15A/GADD34, BBC3/PUMA, BCL2L11/BIM and ERO1L. Negatively regulates; expression of BCL2 and MYOD1, ATF4-dependent transcriptional activation of asparagine synthetase (ASNS), CEBPA-dependent transcriptional activation of hepcidin (HAMP) and CEBPB-mediated expression of peroxisome proliferator-activated receptor gamma (PPARG). Together with ATF4, mediates ER-mediated cell death by promoting expression of genes involved in cellular amino acid metabolic processes, mRNA translation and the unfolded protein response (UPR) in response to ER stress. Inhibits the canonical Wnt signaling pathway by binding to TCF7L2/TCF4, impairing its DNA-binding properties and repressing its transcriptional activity. Plays a regulatory role in the inflammatory response through the induction of caspase-11 (CASP4/CASP11) which induces the activation of caspase-1 (CASP1) and both these caspases increase the activation of pro-IL1B to mature IL1B which is involved in the inflammatory response. Acts as a major regulator of postnatal neovascularization through regulation of endothelial nitric oxide synthase (NOS3)-related signaling. This Homo sapiens (Human) protein is DNA damage-inducible transcript 3 protein (DDIT3).